The primary structure comprises 466 residues: Ribulose bisphosphate carboxylase large chain (466 aa).

Residue Lys-5 is modified to N6,N6,N6-trimethyllysine. The substrate site is built by Asn-114 and Thr-164. Lys-166 (proton acceptor) is an active-site residue. Lys-168 contributes to the substrate binding site. Positions 192, 194, and 195 each coordinate Mg(2+). Position 192 is an N6-carboxylysine (Lys-192). The active-site Proton acceptor is His-285. Arg-286, His-318, and Ser-370 together coordinate substrate.

The protein belongs to the RuBisCO large chain family. Type I subfamily. In terms of assembly, heterohexadecamer of 8 large chains and 8 small chains. Requires Mg(2+) as cofactor.

It localises to the plastid. The protein resides in the chloroplast. The enzyme catalyses 2 (2R)-3-phosphoglycerate + 2 H(+) = D-ribulose 1,5-bisphosphate + CO2 + H2O. It carries out the reaction D-ribulose 1,5-bisphosphate + O2 = 2-phosphoglycolate + (2R)-3-phosphoglycerate + 2 H(+). Its function is as follows. RuBisCO catalyzes two reactions: the carboxylation of D-ribulose 1,5-bisphosphate, the primary event in carbon dioxide fixation, as well as the oxidative fragmentation of the pentose substrate in the photorespiration process. Both reactions occur simultaneously and in competition at the same active site. This Drosera regia (King sundew) protein is Ribulose bisphosphate carboxylase large chain.